A 203-amino-acid chain; its full sequence is dITP/XTP pyrophosphatase (203 aa).

15–20 (SGNAGK) serves as a coordination point for substrate. Mg(2+)-binding residues include Glu-45 and Asp-74. The Proton acceptor role is filled by Asp-74. Residues Ser-75, 153–156 (FGYD), Lys-176, and 181–182 (HR) each bind substrate.

The protein belongs to the HAM1 NTPase family. As to quaternary structure, homodimer. It depends on Mg(2+) as a cofactor.

It catalyses the reaction XTP + H2O = XMP + diphosphate + H(+). The catalysed reaction is dITP + H2O = dIMP + diphosphate + H(+). The enzyme catalyses ITP + H2O = IMP + diphosphate + H(+). Pyrophosphatase that catalyzes the hydrolysis of nucleoside triphosphates to their monophosphate derivatives, with a high preference for the non-canonical purine nucleotides XTP (xanthosine triphosphate), dITP (deoxyinosine triphosphate) and ITP. Seems to function as a house-cleaning enzyme that removes non-canonical purine nucleotides from the nucleotide pool, thus preventing their incorporation into DNA/RNA and avoiding chromosomal lesions. This is dITP/XTP pyrophosphatase from Prochlorococcus marinus (strain MIT 9313).